The following is a 236-amino-acid chain: MATPHINAQPGDFAETVLMPGDPLRAKYIAETFLEDVKQVCDVRSMFGFTGTYKGKKVSVMGHGMGIPSCSIYVHELIAEYGVKNIIRIGSCGAVRDDVKLMDVVIGMGASTDSKVNRIRFSGHDFAAIADYDLLETAVNQARAQQVPVKVGNVFSADLFYTPEPEIFEKMKKLGILGVDMEAAGIYGVAADLGARALTILTVSDHILRGEKLSSEDRQKSFNDMMKVALETAINI.

H5 serves as a coordination point for a purine D-ribonucleoside. Phosphate-binding positions include G21, R25, R44, and 88 to 91 (RIGS). A purine D-ribonucleoside is bound by residues 180-182 (DME) and 204-205 (SD). D205 acts as the Proton donor in catalysis.

Belongs to the PNP/UDP phosphorylase family. Homohexamer; trimer of homodimers.

The catalysed reaction is a purine D-ribonucleoside + phosphate = a purine nucleobase + alpha-D-ribose 1-phosphate. The enzyme catalyses a purine 2'-deoxy-D-ribonucleoside + phosphate = a purine nucleobase + 2-deoxy-alpha-D-ribose 1-phosphate. Catalyzes the reversible phosphorolytic breakdown of the N-glycosidic bond in the beta-(deoxy)ribonucleoside molecules, with the formation of the corresponding free purine bases and pentose-1-phosphate. This Vibrio cholerae serotype O1 (strain ATCC 39315 / El Tor Inaba N16961) protein is Purine nucleoside phosphorylase DeoD-type 2.